Here is a 1179-residue protein sequence, read N- to C-terminus: Integrin alpha-7 (1179 aa).

The signal sequence occupies residues 1–33 (MARIPRCDFLRPPGIYYLITSLLAGLFLPPAIA). Residues 34-1076 (FNLDVMGAIR…YLDPMAVVVE (1043 aa)) lie on the Extracellular side of the membrane. 7 FG-GAP repeats span residues 38-103 (VMGA…ETDC), 110-175 (RGAN…IRDE), 185-238 (EGRP…SPDL), 292-349 (DRLT…ATRL), 350-411 (IPEV…HWAD), 412-467 (ISPL…GVVV), and 471-530 (QVLE…IDPR). Asparagine 86 carries an N-linked (GlcNAc...) asparagine glycan. 3 cysteine pairs are disulfide-bonded: cysteine 94/cysteine 103, cysteine 140/cysteine 163, and cysteine 184/cysteine 197. Residues aspartate 372, asparagine 374, aspartate 376, aspartate 380, aspartate 434, asparagine 436, aspartate 438, aspartate 442, aspartate 492, aspartate 494, asparagine 496, tyrosine 498, and aspartate 500 each coordinate Ca(2+). 6 disulfides stabilise this stretch: cysteine 539-cysteine 546, cysteine 552-cysteine 615, cysteine 681-cysteine 687, cysteine 781-cysteine 792, cysteine 939-cysteine 993, and cysteine 999-cysteine 1004. An N-linked (GlcNAc...) asparagine glycan is attached at asparagine 784. Residues 952–961 (SRDRRRRELG) are compositionally biased toward basic and acidic residues. The interval 952-978 (SRDRRRRELGQPEPQEPPEKVEPSTSW) is disordered. N-linked (GlcNAc...) asparagine glycosylation is present at asparagine 988. N-linked (GlcNAc...) asparagine glycosylation is found at asparagine 1023 and asparagine 1043. Residues 1077-1102 (GVPWWVILLGVLAGLLVLALLVLLLW) traverse the membrane as a helical segment. Residues 1103 to 1179 (KLGFFKRAKH…PDGHPVPATA (77 aa)) lie on the Cytoplasmic side of the membrane. Positions 1105–1109 (GFFKR) match the GFFKR motif motif. Positions 1134 to 1153 (KEEKTGTIQRSNWGNSQWEG) are disordered. Polar residues predominate over residues 1139 to 1152 (GTIQRSNWGNSQWE). Tandem repeats lie at residues 1155–1158 (DAHP), 1163–1166 (DWHP), and 1171–1174 (DGHP). The tract at residues 1155 to 1174 (DAHPILAADWHPELGPDGHP) is 3 X 4 AA repeats of D-X-H-P.

It belongs to the integrin alpha chain family. As to quaternary structure, heterodimer of an alpha and a beta subunit. The alpha subunit is composed of a heavy and a light chain linked by a disulfide bond. Alpha-7 associates with beta-1. Interacts with COMP. Interacts (via C-terminus intracellular tail region) with CIB1; the interaction is stabilized/increased in a calcium- and magnesium-dependent manner. Post-translationally, ADP-ribosylated on at least two sites of the extracellular domain in skeletal myotubes (in vitro). In terms of processing, no proteolytic cleavage to produce the 70 kDa form is seen due to the presence of a Gly instead of an arginine residue at position 647. Isoforms containing segment X2 are found in adult heart, lung and skeletal muscle. Isoforms containing segment X1 are expressed in adult heart, lung and in proliferating skeletal myoblasts but not in adult skeletal muscle. Isoforms containing segment a are exclusively found in skeletal muscle. Isoforms containing segment B are widely expressed. In muscle fibers isoforms containing segment A and B are expressed at myotendinous and neuromuscular junctions; isoforms containing segment C are expressed at neuromuscular junctions and at extrasynaptic sites.

The protein resides in the membrane. Its function is as follows. Integrin alpha-7/beta-1 is the primary laminin receptor on skeletal myoblasts and adult myofibers. During myogenic differentiation, it may induce changes in the shape and mobility of myoblasts, and facilitate their localization at laminin-rich sites of secondary fiber formation. Involved in the maintenance of the myofibers cytoarchitecture as well as for their anchorage, viability and functional integrity. Mice carrying a ITGA7 null allele are viable and fertile, but show progressive muscular dystrophy starting soon after birth, but with a distinct variability in different muscle types. Required to promote contractile phenotype acquisition in differentiated airway smooth muscle (ASM) cells. Acts as a Schwann cell receptor for laminin-2. Acts as a receptor of COMP and mediates its effect on vascular smooth muscle cells (VSMCs) maturation. The protein is Integrin alpha-7 (Itga7) of Mus musculus (Mouse).